Here is a 382-residue protein sequence, read N- to C-terminus: Flap endonuclease 1 (382 aa).

The segment at 1-104 (MGIKGLSQVI…GELEKRTERR (104 aa)) is N-domain. Asp-34 serves as a coordination point for Mg(2+). DNA-binding residues include Arg-47 and Arg-70. Mg(2+) is bound by residues Asp-86, Glu-158, Glu-160, Asp-179, and Asp-181. Residues 122–253 (EAEKFERRLV…KKAVELIKQH (132 aa)) are I-domain. Glu-158 lines the DNA pocket. Gly-231 and Asp-233 together coordinate DNA. Position 233 (Asp-233) interacts with Mg(2+). The interval 336–344 (TQGRIDSFF) is interaction with PCNA. A compositionally biased stretch (basic and acidic residues) spans 359–368 (KAQEEAEKMK). Residues 359–382 (KAQEEAEKMKKGGKKSGPPKKKAK) are disordered. The segment covering 369–382 (KGGKKSGPPKKKAK) has biased composition (basic residues).

It belongs to the XPG/RAD2 endonuclease family. FEN1 subfamily. As to quaternary structure, interacts with PCNA. Three molecules of crn-1 bind to one PCNA trimer with each molecule binding to one PCNA monomer. PCNA stimulates the nuclease activity without altering cleavage specificity. Mg(2+) is required as a cofactor. Post-translationally, phosphorylated. Phosphorylation upon DNA damage induces relocalization to the nuclear plasma.

The protein resides in the nucleus. The protein localises to the nucleolus. It is found in the nucleoplasm. It localises to the mitochondrion. Its function is as follows. Structure-specific nuclease with 5'-flap endonuclease and 5'-3' exonuclease activities involved in DNA replication and repair. During DNA replication, cleaves the 5'-overhanging flap structure that is generated by displacement synthesis when DNA polymerase encounters the 5'-end of a downstream Okazaki fragment. It enters the flap from the 5'-end and then tracks to cleave the flap base, leaving a nick for ligation. Also involved in the long patch base excision repair (LP-BER) pathway, by cleaving within the apurinic/apyrimidinic (AP) site-terminated flap. Acts as a genome stabilization factor that prevents flaps from equilibrating into structures that lead to duplications and deletions. Also possesses 5'-3' exonuclease activity on nicked or gapped double-stranded DNA, and exhibits RNase H activity. Also involved in replication and repair of rDNA and in repairing mitochondrial DNA. The chain is Flap endonuclease 1 from Caenorhabditis briggsae.